The following is a 21-amino-acid chain: Glucose-1-phosphate adenylyltransferase large subunit (21 aa).

Residues 1-21 (SVTADNASETKVREIGQEKSS) form a disordered region. Residues 8-21 (SETKVREIGQEKSS) show a composition bias toward basic and acidic residues.

The protein belongs to the bacterial/plant glucose-1-phosphate adenylyltransferase family. As to quaternary structure, heterotetramer.

Its subcellular location is the plastid. It is found in the chloroplast. The protein localises to the amyloplast. The enzyme catalyses alpha-D-glucose 1-phosphate + ATP + H(+) = ADP-alpha-D-glucose + diphosphate. It functions in the pathway glycan biosynthesis; starch biosynthesis. Activated by 3'phosphoglycerate, inhibited by orthophosphate. Allosteric regulation. Functionally, this protein plays a role in synthesis of starch. It catalyzes the synthesis of the activated glycosyl donor, ADP-glucose from Glc-1-P and ATP. This chain is Glucose-1-phosphate adenylyltransferase large subunit, found in Spinacia oleracea (Spinach).